The chain runs to 99 residues: MVELQEKNGSVCIAVRAQPRSSKSMVSGEWNGALKVHLQSPPVDDAANEECCRLLARLFQVPPSRVHLVAGHSSRNKRVMVEGVSAAMATELLQPFLHT.

This sequence belongs to the UPF0235 family.

In Chlorobium chlorochromatii (strain CaD3), this protein is UPF0235 protein Cag_0319.